The chain runs to 303 residues: Centromere protein O (303 aa).

The stretch at Ala-38 to Ala-77 forms a coiled coil.

It belongs to the CENP-O/MCM21 family.

It localises to the nucleus. The protein localises to the chromosome. The protein resides in the centromere. Functionally, probable component of a centromeric complex involved in assembly of kinetochore proteins, mitotic progression and chromosome segregation. In Xenopus tropicalis (Western clawed frog), this protein is Centromere protein O (cenpo).